Consider the following 299-residue polypeptide: Protease HtpX homolog (299 aa).

2 helical membrane-spanning segments follow: residues 16 to 36 (VMAA…YVFF) and 38 to 58 (SAIA…VLMI). Histidine 144 provides a ligand contact to Zn(2+). Glutamate 145 is a catalytic residue. Histidine 148 contacts Zn(2+). Transmembrane regions (helical) follow at residues 159–179 (IALA…NAFW) and 198–218 (VLLM…ASLV). Glutamate 227 contacts Zn(2+).

This sequence belongs to the peptidase M48B family. Requires Zn(2+) as cofactor.

It localises to the cell membrane. The polypeptide is Protease HtpX homolog (Lactiplantibacillus plantarum (strain ATCC BAA-793 / NCIMB 8826 / WCFS1) (Lactobacillus plantarum)).